The chain runs to 159 residues: Ribosomal RNA large subunit methyltransferase H (159 aa).

S-adenosyl-L-methionine-binding residues include Leu-76 and Gly-108.

This sequence belongs to the RNA methyltransferase RlmH family. In terms of assembly, homodimer.

The protein localises to the cytoplasm. The catalysed reaction is pseudouridine(1915) in 23S rRNA + S-adenosyl-L-methionine = N(3)-methylpseudouridine(1915) in 23S rRNA + S-adenosyl-L-homocysteine + H(+). In terms of biological role, specifically methylates the pseudouridine at position 1915 (m3Psi1915) in 23S rRNA. The sequence is that of Ribosomal RNA large subunit methyltransferase H from Lactiplantibacillus plantarum (strain ATCC BAA-793 / NCIMB 8826 / WCFS1) (Lactobacillus plantarum).